The chain runs to 539 residues: Copine-C (539 aa).

2 C2 domains span residues 1 to 120 and 128 to 251; these read MIPS…KIVA and VTGK…PLIN. Ca(2+) contacts are provided by Leu-23, Asp-24, Asp-30, Asp-83, Asp-85, and Asp-98. Residues 290–507 form the VWFA domain; sequence SLMTAIDCTG…ALAQETLKEI (218 aa).

Belongs to the copine family. It depends on Ca(2+) as a cofactor.

This is Copine-C (cpnC) from Dictyostelium discoideum (Social amoeba).